We begin with the raw amino-acid sequence, 276 residues long: Hydroxyethylthiazole kinase (276 aa).

ATP-binding residues include R126 and S172. Substrate is bound at residue G199.

The protein belongs to the Thz kinase family. It depends on Mg(2+) as a cofactor.

The catalysed reaction is 5-(2-hydroxyethyl)-4-methylthiazole + ATP = 4-methyl-5-(2-phosphooxyethyl)-thiazole + ADP + H(+). The protein operates within cofactor biosynthesis; thiamine diphosphate biosynthesis; 4-methyl-5-(2-phosphoethyl)-thiazole from 5-(2-hydroxyethyl)-4-methylthiazole: step 1/1. Its function is as follows. Catalyzes the phosphorylation of the hydroxyl group of 4-methyl-5-beta-hydroxyethylthiazole (THZ). This Burkholderia pseudomallei (strain 1710b) protein is Hydroxyethylthiazole kinase.